We begin with the raw amino-acid sequence, 412 residues long: Imidazolonepropionase (412 aa).

Residues His-76 and His-78 each coordinate Fe(3+). Residues His-76 and His-78 each contribute to the Zn(2+) site. 4-imidazolone-5-propanoate contacts are provided by Arg-85, Tyr-148, and His-181. An N-formimidoyl-L-glutamate-binding site is contributed by Tyr-148. A Fe(3+)-binding site is contributed by His-242. Residue His-242 participates in Zn(2+) binding. Glu-245 is a 4-imidazolone-5-propanoate binding site. A Fe(3+)-binding site is contributed by Asp-317. Asp-317 serves as a coordination point for Zn(2+). N-formimidoyl-L-glutamate contacts are provided by Asn-319 and Gly-321. Ser-322 is a binding site for 4-imidazolone-5-propanoate.

Belongs to the metallo-dependent hydrolases superfamily. HutI family. It depends on Zn(2+) as a cofactor. Fe(3+) is required as a cofactor.

Its subcellular location is the cytoplasm. It carries out the reaction 4-imidazolone-5-propanoate + H2O = N-formimidoyl-L-glutamate. It functions in the pathway amino-acid degradation; L-histidine degradation into L-glutamate; N-formimidoyl-L-glutamate from L-histidine: step 3/3. Functionally, catalyzes the hydrolytic cleavage of the carbon-nitrogen bond in imidazolone-5-propanoate to yield N-formimidoyl-L-glutamate. It is the third step in the universal histidine degradation pathway. The chain is Imidazolonepropionase from Staphylococcus aureus (strain bovine RF122 / ET3-1).